Consider the following 116-residue polypeptide: Flagellar transcriptional regulator FlhD (116 aa).

The protein belongs to the FlhD family. As to quaternary structure, homodimer; disulfide-linked. Forms a heterohexamer composed of two FlhC and four FlhD subunits. Each FlhC binds a FlhD dimer, forming a heterotrimer, and a hexamer assembles by dimerization of two heterotrimers.

It is found in the cytoplasm. Functionally, functions in complex with FlhC as a master transcriptional regulator that regulates transcription of several flagellar and non-flagellar operons by binding to their promoter region. Activates expression of class 2 flagellar genes, including fliA, which is a flagellum-specific sigma factor that turns on the class 3 genes. Also regulates genes whose products function in a variety of physiological pathways. The sequence is that of Flagellar transcriptional regulator FlhD from Proteus mirabilis (strain HI4320).